The sequence spans 156 residues: MPRRREVPKRDILPDPKFGNVEVAKFMNVLMLDGKKSVAERIVYGAFDQIEKKAGKAPIEVFSVAINNVKPVVEVKSRRVGGANYQVPVEVRPSRRLALAMRWLREAAKKRSEKSMALRLAGELLEAAEGRGGAMKKRDEVHRMAEANKAFSHFRF.

The protein belongs to the universal ribosomal protein uS7 family. As to quaternary structure, part of the 30S ribosomal subunit. Contacts proteins S9 and S11.

Its function is as follows. One of the primary rRNA binding proteins, it binds directly to 16S rRNA where it nucleates assembly of the head domain of the 30S subunit. Is located at the subunit interface close to the decoding center, probably blocks exit of the E-site tRNA. The chain is Small ribosomal subunit protein uS7 from Cupriavidus metallidurans (strain ATCC 43123 / DSM 2839 / NBRC 102507 / CH34) (Ralstonia metallidurans).